Here is a 479-residue protein sequence, read N- to C-terminus: RAC-gamma serine/threonine-protein kinase (479 aa).

N-acetylserine is present on Ser2. A PH domain is found at 5–107; sequence TIVKEDWVQK…WTEAIQAVAD (103 aa). Cys59 and Cys76 form a disulfide bridge. The Protein kinase domain maps to 148 to 405; sequence FDYLKLLGKG…PKEIMRHSFF (258 aa). Residues 154–162 and Lys177 each bind ATP; that span reads LGKGTFGKV. The Proton acceptor role is filled by Asp271. A disulfide bridge connects residues Cys293 and Cys307. Thr302 carries an O-linked (GlcNAc) threonine glycan. Position 305 is a phosphothreonine; by PDPK1 (Thr305). An O-linked (GlcNAc) threonine glycan is attached at Thr309. The region spanning 406–479 is the AGC-kinase C-terminal domain; that stretch reads SGVNWQDVYD…QFSYSASGRE (74 aa). Residues 446 to 479 form a disordered region; sequence ITPPEKDDDDGMDCMDNERRPHFPQFSYSASGRE. Thr447 is modified (phosphothreonine). Residues 451-460 show a composition bias toward acidic residues; it reads KDDDDGMDCM. At Ser472 the chain carries Phosphoserine; by PKC/PRKCZ. O-linked (GlcNAc) serine; alternate glycosylation occurs at Ser472.

This sequence belongs to the protein kinase superfamily. AGC Ser/Thr protein kinase family. RAC subfamily. As to quaternary structure, interacts (via PH domain) with TCL1A; this enhances AKT3 phosphorylation and activation. Interacts with TRAF6. Interacts with KCTD20. Interacts with BTBD10. Post-translationally, phosphorylation on Thr-305 and Ser-472 is required for full activity. Phosphorylation of the activation loop at Thr-305 by PDPK1/PDK1 is a prerequisite for full activation. Phosphorylation at Ser-472 by mTORC2 in response to growth factors plays a key role in AKT1 activation by facilitating subsequent phosphorylation of the activation loop by PDPK1/PDK1. In terms of processing, ubiquitinated. When fully phosphorylated and translocated into the nucleus, undergoes 'Lys-48'-polyubiquitination catalyzed by TTC3, leading to its degradation by the proteasome. O-GlcNAcylation at Thr-302 and Thr-309 inhibits activating phosphorylation at Thr-305 via disrupting the interaction between AKT and PDPK1/PDK1.

The protein resides in the nucleus. It localises to the cytoplasm. Its subcellular location is the membrane. The catalysed reaction is L-seryl-[protein] + ATP = O-phospho-L-seryl-[protein] + ADP + H(+). It carries out the reaction L-threonyl-[protein] + ATP = O-phospho-L-threonyl-[protein] + ADP + H(+). Its activity is regulated as follows. Two specific sites, one in the kinase domain (Thr-305) and the other in the C-terminal regulatory region (Ser-472), need to be phosphorylated for its full activation. IGF-1 leads to the activation of AKT3, which may play a role in regulating cell survival. In terms of biological role, AKT3 is one of 3 closely related serine/threonine-protein kinases (AKT1, AKT2 and AKT3) called the AKT kinase, and which regulate many processes including metabolism, proliferation, cell survival, growth and angiogenesis. This is mediated through serine and/or threonine phosphorylation of a range of downstream substrates. Over 100 substrate candidates have been reported so far, but for most of them, no isoform specificity has been reported. AKT3 is the least studied AKT isoform. It plays an important role in brain development and is crucial for the viability of malignant glioma cells. AKT3 isoform may also be the key molecule in up-regulation and down-regulation of MMP13 via IL13. Required for the coordination of mitochondrial biogenesis with growth factor-induced increases in cellular energy demands. Down-regulation by RNA interference reduces the expression of the phosphorylated form of BAD, resulting in the induction of caspase-dependent apoptosis. This Rattus norvegicus (Rat) protein is RAC-gamma serine/threonine-protein kinase (Akt3).